Here is a 395-residue protein sequence, read N- to C-terminus: NAD(P)H-quinone oxidoreductase subunit H, chloroplastic (395 aa).

It belongs to the complex I 49 kDa subunit family. NDH is composed of at least 16 different subunits, 5 of which are encoded in the nucleus.

The protein localises to the plastid. Its subcellular location is the chloroplast thylakoid membrane. It carries out the reaction a plastoquinone + NADH + (n+1) H(+)(in) = a plastoquinol + NAD(+) + n H(+)(out). The catalysed reaction is a plastoquinone + NADPH + (n+1) H(+)(in) = a plastoquinol + NADP(+) + n H(+)(out). Its function is as follows. NDH shuttles electrons from NAD(P)H:plastoquinone, via FMN and iron-sulfur (Fe-S) centers, to quinones in the photosynthetic chain and possibly in a chloroplast respiratory chain. The immediate electron acceptor for the enzyme in this species is believed to be plastoquinone. Couples the redox reaction to proton translocation, and thus conserves the redox energy in a proton gradient. The polypeptide is NAD(P)H-quinone oxidoreductase subunit H, chloroplastic (Coffea arabica (Arabian coffee)).